The chain runs to 295 residues: Pyridoxal 5'-phosphate synthase subunit PdxS (295 aa).

Aspartate 25 is a D-ribose 5-phosphate binding site. Lysine 82 functions as the Schiff-base intermediate with D-ribose 5-phosphate in the catalytic mechanism. D-ribose 5-phosphate is bound at residue glycine 154. Arginine 166 provides a ligand contact to D-glyceraldehyde 3-phosphate. Residues glycine 215 and 236–237 (GS) contribute to the D-ribose 5-phosphate site.

The protein belongs to the PdxS/SNZ family. As to quaternary structure, in the presence of PdxT, forms a dodecamer of heterodimers.

It carries out the reaction aldehydo-D-ribose 5-phosphate + D-glyceraldehyde 3-phosphate + L-glutamine = pyridoxal 5'-phosphate + L-glutamate + phosphate + 3 H2O + H(+). It participates in cofactor biosynthesis; pyridoxal 5'-phosphate biosynthesis. Its function is as follows. Catalyzes the formation of pyridoxal 5'-phosphate from ribose 5-phosphate (RBP), glyceraldehyde 3-phosphate (G3P) and ammonia. The ammonia is provided by the PdxT subunit. Can also use ribulose 5-phosphate and dihydroxyacetone phosphate as substrates, resulting from enzyme-catalyzed isomerization of RBP and G3P, respectively. The sequence is that of Pyridoxal 5'-phosphate synthase subunit PdxS from Staphylococcus carnosus (strain TM300).